Here is a 409-residue protein sequence, read N- to C-terminus: NADH-quinone oxidoreductase subunit D (409 aa).

It belongs to the complex I 49 kDa subunit family. NDH-1 is composed of 14 different subunits. Subunits NuoB, C, D, E, F, and G constitute the peripheral sector of the complex.

It is found in the cell inner membrane. The enzyme catalyses a quinone + NADH + 5 H(+)(in) = a quinol + NAD(+) + 4 H(+)(out). Functionally, NDH-1 shuttles electrons from NADH, via FMN and iron-sulfur (Fe-S) centers, to quinones in the respiratory chain. The immediate electron acceptor for the enzyme in this species is believed to be ubiquinone. Couples the redox reaction to proton translocation (for every two electrons transferred, four hydrogen ions are translocated across the cytoplasmic membrane), and thus conserves the redox energy in a proton gradient. In Campylobacter curvus (strain 525.92), this protein is NADH-quinone oxidoreductase subunit D.